Here is a 161-residue protein sequence, read N- to C-terminus: Large ribosomal subunit protein uL10 (161 aa).

Belongs to the universal ribosomal protein uL10 family. Part of the ribosomal stalk of the 50S ribosomal subunit. The N-terminus interacts with L11 and the large rRNA to form the base of the stalk. The C-terminus forms an elongated spine to which L12 dimers bind in a sequential fashion forming a multimeric L10(L12)X complex.

Its function is as follows. Forms part of the ribosomal stalk, playing a central role in the interaction of the ribosome with GTP-bound translation factors. This Sulfurovum sp. (strain NBC37-1) protein is Large ribosomal subunit protein uL10.